We begin with the raw amino-acid sequence, 550 residues long: Dihydroxy-acid dehydratase (550 aa).

Asp-78 is a binding site for Mg(2+). Cys-119 contacts [2Fe-2S] cluster. Positions 120 and 121 each coordinate Mg(2+). Lys-121 is subject to N6-carboxylysine. Cys-191 contacts [2Fe-2S] cluster. Position 440 (Glu-440) interacts with Mg(2+). The Proton acceptor role is filled by Ser-466.

The protein belongs to the IlvD/Edd family. Homodimer. [2Fe-2S] cluster serves as cofactor. Requires Mg(2+) as cofactor.

The catalysed reaction is (2R)-2,3-dihydroxy-3-methylbutanoate = 3-methyl-2-oxobutanoate + H2O. It carries out the reaction (2R,3R)-2,3-dihydroxy-3-methylpentanoate = (S)-3-methyl-2-oxopentanoate + H2O. The protein operates within amino-acid biosynthesis; L-isoleucine biosynthesis; L-isoleucine from 2-oxobutanoate: step 3/4. It participates in amino-acid biosynthesis; L-valine biosynthesis; L-valine from pyruvate: step 3/4. Its function is as follows. Functions in the biosynthesis of branched-chain amino acids. Catalyzes the dehydration of (2R,3R)-2,3-dihydroxy-3-methylpentanoate (2,3-dihydroxy-3-methylvalerate) into 2-oxo-3-methylpentanoate (2-oxo-3-methylvalerate) and of (2R)-2,3-dihydroxy-3-methylbutanoate (2,3-dihydroxyisovalerate) into 2-oxo-3-methylbutanoate (2-oxoisovalerate), the penultimate precursor to L-isoleucine and L-valine, respectively. The sequence is that of Dihydroxy-acid dehydratase from Methanococcus maripaludis (strain C7 / ATCC BAA-1331).